A 949-amino-acid chain; its full sequence is Glycine dehydrogenase (decarboxylating) (949 aa).

Lysine 704 carries the post-translational modification N6-(pyridoxal phosphate)lysine.

The protein belongs to the GcvP family. As to quaternary structure, the glycine cleavage system is composed of four proteins: P, T, L and H. It depends on pyridoxal 5'-phosphate as a cofactor.

The catalysed reaction is N(6)-[(R)-lipoyl]-L-lysyl-[glycine-cleavage complex H protein] + glycine + H(+) = N(6)-[(R)-S(8)-aminomethyldihydrolipoyl]-L-lysyl-[glycine-cleavage complex H protein] + CO2. The glycine cleavage system catalyzes the degradation of glycine. The P protein binds the alpha-amino group of glycine through its pyridoxal phosphate cofactor; CO(2) is released and the remaining methylamine moiety is then transferred to the lipoamide cofactor of the H protein. The chain is Glycine dehydrogenase (decarboxylating) from Bacteroides fragilis (strain YCH46).